We begin with the raw amino-acid sequence, 138 residues long: Putative pre-16S rRNA nuclease (138 aa).

This sequence belongs to the YqgF nuclease family.

The protein resides in the cytoplasm. Functionally, could be a nuclease involved in processing of the 5'-end of pre-16S rRNA. This Clostridium beijerinckii (strain ATCC 51743 / NCIMB 8052) (Clostridium acetobutylicum) protein is Putative pre-16S rRNA nuclease.